An 871-amino-acid chain; its full sequence is Pentatricopeptide repeat-containing protein At3g06920 (871 aa).

PPR repeat units follow at residues Cys-97–Pro-131, Ser-132–Pro-166, Ala-167–Pro-201, Thr-202–Ala-236, Asp-237–Pro-271, Asp-272–Pro-306, Cys-307–Pro-341, Ser-342–Asp-372, Asn-376–Pro-410, Asn-411–Pro-445, Asp-446–Thr-480, Asn-481–Pro-515, Asp-516–Pro-550, Asp-551–Leu-585, Asp-586–Pro-620, Thr-621–Leu-655, Asn-656–Pro-690, Asn-691–Pro-725, Asn-726–Pro-760, Ser-761–Pro-795, and Asp-796–Ile-830.

Belongs to the PPR family. P subfamily.

The sequence is that of Pentatricopeptide repeat-containing protein At3g06920 from Arabidopsis thaliana (Mouse-ear cress).